Reading from the N-terminus, the 515-residue chain is Leucine-rich repeat transmembrane neuronal protein 2 (515 aa).

The N-terminal stretch at M1–A33 is a signal peptide. The Extracellular segment spans residues C34–R421. An N-linked (GlcNAc...) asparagine glycan is attached at N57. 10 LRR repeats span residues K61–S83, F84–G107, Y109–Q131, L132–G155, L156–D179, R181–G203, I205–R227, S229–T251, W252–T275, and M276–S299. A glycan (N-linked (GlcNAc...) asparagine) is linked at N126. N-linked (GlcNAc...) asparagine glycosylation is present at N243. A glycan (N-linked (GlcNAc...) asparagine) is linked at N362. Residues V422–I442 traverse the membrane as a helical segment. The Cytoplasmic portion of the chain corresponds to S443–V515. The Involved in DLG4-binding motif lies at E512–V515.

Belongs to the LRRTM family. Interacts with DLG4. Interacts with neurexin NRXN1; interaction is mediated by heparan sulfate glycan modification on neurexin. In terms of tissue distribution, expressed in neuronal tissues. Widely distributed in neuropil regions in discrete puncta throughout the brain (at protein level). Detected in cortex, thalamus, striatum, olfactory bulb, cerebellum and all hippocampal subfields (at protein level). More abundant in deep than in superficial layers of neocortex (at protein level).

Its subcellular location is the cell membrane. The protein resides in the postsynaptic cell membrane. Involved in the development and maintenance of excitatory synapses in the nervous system. Regulates surface expression of AMPA receptors and instructs the development of functional glutamate release sites. Acts as a ligand for the presynaptic receptors NRXN1-A and NRXN1-B. The sequence is that of Leucine-rich repeat transmembrane neuronal protein 2 (Lrrtm2) from Rattus norvegicus (Rat).